Here is an 85-residue protein sequence, read N- to C-terminus: Large ribosomal subunit protein bL27 (85 aa).

Residues 1–20 are disordered; sequence MAHKKAAGSTRNGRDSEAKR.

It belongs to the bacterial ribosomal protein bL27 family.

The polypeptide is Large ribosomal subunit protein bL27 (Colwellia psychrerythraea (strain 34H / ATCC BAA-681) (Vibrio psychroerythus)).